Consider the following 349-residue polypeptide: Putative transport protein YhhT (349 aa).

At 1–10 (METPQPDKTG) the chain is on the cytoplasmic side. A helical membrane pass occupies residues 11-31 (MHILLKLASLVVILAGIHAAA). Asp-32 is a topological domain (periplasmic). A helical membrane pass occupies residues 33–53 (IIVQLLLALFFAIVLNPLVTW). At 54–62 (FIRRGVQRP) the chain is on the cytoplasmic side. The chain crosses the membrane as a helical span at residues 63–83 (VAITIVVVVMLIALTALVGVL). Over 84 to 142 (AASFNEFISMLPKFNKELTRKLFKLQEMLPFLNLHMSPERMLQRMDSEKVVTFTTALMT) the chain is Periplasmic. A helical transmembrane segment spans residues 143–163 (GLSGAMASVLLLVMTVVFMLF). Topologically, residues 164–208 (EVRHVPYKMRFALNNPQIHIAGLHRALKGVSHYLALKTLLSLWTG) are cytoplasmic. A helical membrane pass occupies residues 209–229 (VIVWLGLELMGVQFALMWAVL). Over 230–234 (AFLLN) the chain is Periplasmic. Residues 235–255 (YVPNIGAVISAVPPMIQVLLF) traverse the membrane as a helical segment. Over 256 to 257 (NG) the chain is Cytoplasmic. Residues 258–278 (VYECILVGALFLVVHMVIGNI) traverse the membrane as a helical segment. The Periplasmic segment spans residues 279–292 (LEPRMMGHRLGMST). A helical membrane pass occupies residues 293–313 (MVVFLSLLIWGWLLGPVGMLL). The Cytoplasmic portion of the chain corresponds to 314 to 349 (SVPLTSVCKIWMETTKGGSKLAILLGPGRPKSRLPG).

It belongs to the autoinducer-2 exporter (AI-2E) (TC 2.A.86) family.

The protein resides in the cell inner membrane. The chain is Putative transport protein YhhT (yhhT) from Escherichia coli O157:H7.